The following is a 489-amino-acid chain: Dihydropyrimidinase 1 (489 aa).

Residues His-61, His-63, and Lys-156 each coordinate Zn(2+). N6-carboxylysine is present on Lys-156. Residue Tyr-161 coordinates substrate. Positions 189 and 245 each coordinate Zn(2+). Ser-295 serves as a coordination point for substrate. Residue Asp-323 participates in Zn(2+) binding. Substrate is bound at residue Asn-344.

This sequence belongs to the metallo-dependent hydrolases superfamily. Hydantoinase/dihydropyrimidinase family. Homotetramer. Zn(2+) serves as cofactor. In terms of processing, carboxylation allows a single lysine to coordinate two zinc ions.

It localises to the nucleus. It carries out the reaction 5,6-dihydrouracil + H2O = 3-(carbamoylamino)propanoate + H(+). This is Dihydropyrimidinase 1 (dhp-1) from Caenorhabditis briggsae.